A 264-amino-acid polypeptide reads, in one-letter code: Thymidylate synthase (264 aa).

DUMP is bound at residue Arg21. (6R)-5,10-methylene-5,6,7,8-tetrahydrofolate is bound at residue His51. A dUMP-binding site is contributed by 126 to 127 (RR). The Nucleophile role is filled by Cys146. DUMP-binding positions include 166-169 (RSAD), Asn177, and 207-209 (HLY). Residue Asp169 participates in (6R)-5,10-methylene-5,6,7,8-tetrahydrofolate binding. Ala263 is a binding site for (6R)-5,10-methylene-5,6,7,8-tetrahydrofolate.

The protein belongs to the thymidylate synthase family. Bacterial-type ThyA subfamily. As to quaternary structure, homodimer.

The protein resides in the cytoplasm. The catalysed reaction is dUMP + (6R)-5,10-methylene-5,6,7,8-tetrahydrofolate = 7,8-dihydrofolate + dTMP. The protein operates within pyrimidine metabolism; dTTP biosynthesis. Its function is as follows. Catalyzes the reductive methylation of 2'-deoxyuridine-5'-monophosphate (dUMP) to 2'-deoxythymidine-5'-monophosphate (dTMP) while utilizing 5,10-methylenetetrahydrofolate (mTHF) as the methyl donor and reductant in the reaction, yielding dihydrofolate (DHF) as a by-product. This enzymatic reaction provides an intracellular de novo source of dTMP, an essential precursor for DNA biosynthesis. This Pseudomonas aeruginosa (strain LESB58) protein is Thymidylate synthase.